Reading from the N-terminus, the 622-residue chain is DNA mismatch repair protein MutL (622 aa).

Positions 376-401 (REVREGSSTGRAGNYQPPEPPSREAM) are disordered.

Belongs to the DNA mismatch repair MutL/HexB family.

In terms of biological role, this protein is involved in the repair of mismatches in DNA. It is required for dam-dependent methyl-directed DNA mismatch repair. May act as a 'molecular matchmaker', a protein that promotes the formation of a stable complex between two or more DNA-binding proteins in an ATP-dependent manner without itself being part of a final effector complex. The sequence is that of DNA mismatch repair protein MutL from Aeromonas hydrophila subsp. hydrophila (strain ATCC 7966 / DSM 30187 / BCRC 13018 / CCUG 14551 / JCM 1027 / KCTC 2358 / NCIMB 9240 / NCTC 8049).